The primary structure comprises 1347 residues: Spermatogenesis-associated protein 31A3 (1347 aa).

A helical transmembrane segment spans residues 23-43; sequence PWVLDIFLTLVFALGFFFLLL. 8 disordered regions span residues 55 to 87, 108 to 142, 154 to 235, 373 to 397, 627 to 658, 900 to 955, 1084 to 1161, and 1313 to 1335; these read PSPSPGKRKCPVGRRRRPRGRMKNHSLRAGREC, HLDKGDFGQLSGPDPPGEVGERAPDGASQSSHEPM, SPDP…STLI, EQDTTNPKPFWNMGENSKQLPGPQK, QDESPGTSQAKGKPSPWQSSMSTGESSKEAQK, RGIP…REAV, VHEE…PSVS, and KAVSPVSPPQHWPKTSGASSHHH. Residues 60–82 show a composition bias toward basic residues; sequence GKRKCPVGRRRRPRGRMKNHSLR. Positions 165 to 178 are enriched in polar residues; sequence LASTPSPGPMTTSV. Positions 198-211 are enriched in pro residues; that stretch reads PEPPALFPHPPHTP. Composition is skewed to polar residues over residues 627–651 and 927–948; these read QDESPGTSQAKGKPSPWQSSMSTGE and LTYSLTGSTQQSRSLGAQSSKA. Composition is skewed to basic and acidic residues over residues 1108-1127 and 1137-1146; these read HKSEKFRKPNLEKHEERLEG and RKTEDTHQDE.

Belongs to the SPATA31 family.

The protein resides in the membrane. Functionally, may play a role in spermatogenesis. The protein is Spermatogenesis-associated protein 31A3 (SPATA31A3) of Homo sapiens (Human).